The chain runs to 190 residues: MEAETKTLPLENASILSEGSLQEGHRLWIGNLDPKITEYHLLRLLQKFGTVKQFDFLFHKSGALEGQPRGYCFVNFETKQEAEQAIQCLNGKLALSKKLVVRWAHAQVKRYDHNKNDKILPISLEPSSSTEPAQSNLSVTAKIKAIEAKLKMMAENPDAEYPAAPVYSYFKPPDKKRTTPYSRTAWKSRR.

Residues 25–106 enclose the RRM domain; it reads HRLWIGNLDP…KKLVVRWAHA (82 aa). Positions 166–190 are disordered; that stretch reads VYSYFKPPDKKRTTPYSRTAWKSRR.

The sequence is that of Probable RNA-binding protein 18 (RBM18) from Bos taurus (Bovine).